Reading from the N-terminus, the 342-residue chain is MKIAVLLSGGVDSSYSAYSLKEQGHELVGIYLKLHASEKKHDLYIKNAQKACEFLGIPLEVLDFQKDFKSAVYDEFINAYEEGQTPNPCALCNPLMKFGLALDHALKLGCEKIATGHYARVKEIDKISYIQEALDKTKDQSYFLYALEHEVIAKLVFPLGDLLKKDIKPLALNAMPFLGTLETYKESQEICFVEKSYIDTLKKHVEVEKEGVVKNLQGEVIGTHKGYMQYTIGKRKGFSIKGALEPHFVVGIDAKKNELVVGKKEDLATHSLKAKNKSLMKDFKDGEYFIKARYRSVPAKAHVSLKDEVIEVGFKEPFYGVAKGQALVVYKDDILLGGGVIV.

Residues 6–13 and leucine 32 each bind ATP; that span reads LLSGGVDS. Catalysis depends on cysteine 92, which acts as the Nucleophile. A disulfide bridge connects residues cysteine 92 and cysteine 191. Glycine 116 contacts ATP. Residues 138-140 are interaction with tRNA; that stretch reads KDQ. The active-site Cysteine persulfide intermediate is the cysteine 191. The interaction with tRNA stretch occupies residues 293-294; it reads RY.

This sequence belongs to the MnmA/TRMU family.

The protein localises to the cytoplasm. The enzyme catalyses S-sulfanyl-L-cysteinyl-[protein] + uridine(34) in tRNA + AH2 + ATP = 2-thiouridine(34) in tRNA + L-cysteinyl-[protein] + A + AMP + diphosphate + H(+). Catalyzes the 2-thiolation of uridine at the wobble position (U34) of tRNA, leading to the formation of s(2)U34. The chain is tRNA-specific 2-thiouridylase MnmA from Helicobacter pylori (strain ATCC 700392 / 26695) (Campylobacter pylori).